The chain runs to 70 residues: MGKVTGISGRFGARYGSTLRKKWKEIMEKRYDEHQCPYCKTTGKVIRLASGIWYCKKCNSKWAGLAYTPY.

Zn(2+) contacts are provided by cysteine 36, cysteine 39, cysteine 55, and cysteine 58. A C4-type zinc finger spans residues 36 to 58 (CPYCKTTGKVIRLASGIWYCKKC).

Belongs to the eukaryotic ribosomal protein eL43 family. Putative zinc-binding subfamily. As to quaternary structure, part of the 50S ribosomal subunit. The cofactor is Zn(2+).

Functionally, binds to the 23S rRNA. In Saccharolobus solfataricus (strain ATCC 35092 / DSM 1617 / JCM 11322 / P2) (Sulfolobus solfataricus), this protein is Large ribosomal subunit protein eL43.